The sequence spans 212 residues: MEHFHGNRWDQLRAVEADILCPPPADPFQIFPSGWTRASELSEKGWRELLDRRRSQSPPPREPSPDVRRAIRRTPPPRVNRVAPIRLPERRPLRQLNANDARRPAQDAANRINQENMRAGNIDNGQPRRRALSPTQLPGVRAIPKDFNRFFRGLLTPGEFFAKSQTRYLGPFDEMPTEDTLPAADEYIILQRMGRLPDSGKSIFRQVGNLST.

Positions 47-129 are disordered; the sequence is RELLDRRRSQ…GNIDNGQPRR (83 aa).

This is an uncharacterized protein from Caenorhabditis elegans.